The following is a 47-amino-acid chain: Small ribosomal subunit protein uS14 (47 aa).

Residues C12, C15, C30, and C33 each coordinate Zn(2+).

It belongs to the universal ribosomal protein uS14 family. Zinc-binding uS14 subfamily. In terms of assembly, part of the 30S ribosomal subunit. Requires Zn(2+) as cofactor.

In terms of biological role, binds 16S rRNA, required for the assembly of 30S particles. The protein is Small ribosomal subunit protein uS14 of Methanosphaera stadtmanae (strain ATCC 43021 / DSM 3091 / JCM 11832 / MCB-3).